A 212-amino-acid polypeptide reads, in one-letter code: Peptide methionine sulfoxide reductase MsrA (212 aa).

Residue cysteine 52 is part of the active site.

This sequence belongs to the MsrA Met sulfoxide reductase family.

The catalysed reaction is L-methionyl-[protein] + [thioredoxin]-disulfide + H2O = L-methionyl-(S)-S-oxide-[protein] + [thioredoxin]-dithiol. The enzyme catalyses [thioredoxin]-disulfide + L-methionine + H2O = L-methionine (S)-S-oxide + [thioredoxin]-dithiol. Its function is as follows. Has an important function as a repair enzyme for proteins that have been inactivated by oxidation. Catalyzes the reversible oxidation-reduction of methionine sulfoxide in proteins to methionine. In Escherichia fergusonii (strain ATCC 35469 / DSM 13698 / CCUG 18766 / IAM 14443 / JCM 21226 / LMG 7866 / NBRC 102419 / NCTC 12128 / CDC 0568-73), this protein is Peptide methionine sulfoxide reductase MsrA.